The primary structure comprises 78 residues: Structural DNA-binding protein p10 (78 aa).

Residues 1-27 (MPTKAGTKSTANKKTTKGSSKSGSSRG) show a composition bias toward low complexity. Positions 1-41 (MPTKAGTKSTANKKTTKGSSKSGSSRGHTGKTHASSSMHSG) are disordered.

Belongs to the asfivirus P10 family.

It localises to the virion. Its function is as follows. May play a role in genome packaging through direct interaction with viral DNA. Binds to ssDNA and dsDNA with the same apparent affinity in vitro. The polypeptide is Structural DNA-binding protein p10 (African swine fever virus (strain Badajoz 1971 Vero-adapted) (Ba71V)).